The following is a 503-amino-acid chain: Zinc-regulated transporter 3 (503 aa).

Transmembrane regions (helical) follow at residues 8-28 (LLFS…VPLL), 42-62 (LVNY…LYML), and 75-95 (FPGL…VHAF). The interval 112-171 (GSHIHSKSHSHSHSHSHADSHSNFSNDHDLENAPSEHGYATSSSSVSENDPLITKDSDRP) is disordered. Residues 115-126 (IHSKSHSHSHSH) show a composition bias toward basic residues. The segment covering 127-142 (SHADSHSNFSNDHDLE) has biased composition (basic and acidic residues). Serine 178 and serine 188 each carry phosphoserine. Disordered stretches follow at residues 221–244 (QSER…DKDH) and 274–295 (HHSS…FSSP). Over residues 280–295 (PENYGSNQLSHSFSSP) the composition is skewed to polar residues. 5 helical membrane-spanning segments follow: residues 336–356 (IGMQ…FIIF), 371–391 (IFLS…LPFY), 398–418 (WVAI…GALI), 438–458 (LLSV…QTGI), and 482–502 (GTTC…SALF).

Belongs to the ZIP transporter (TC 2.A.5) family.

It is found in the vacuole membrane. Its function is as follows. Transports zinc from storage in the vacuole to the cytoplasm. The polypeptide is Zinc-regulated transporter 3 (ZRT3) (Saccharomyces cerevisiae (strain ATCC 204508 / S288c) (Baker's yeast)).